The following is a 520-amino-acid chain: Maturase K (520 aa).

This sequence belongs to the intron maturase 2 family. MatK subfamily.

The protein resides in the plastid. It localises to the chloroplast. Functionally, usually encoded in the trnK tRNA gene intron. Probably assists in splicing its own and other chloroplast group II introns. The chain is Maturase K from Cycas taitungensis (Prince sago).